Consider the following 126-residue polypeptide: Holo-[acyl-carrier-protein] synthase (126 aa).

Mg(2+)-binding residues include Asp8 and Glu56.

The protein belongs to the P-Pant transferase superfamily. AcpS family. Mg(2+) is required as a cofactor.

Its subcellular location is the cytoplasm. It carries out the reaction apo-[ACP] + CoA = holo-[ACP] + adenosine 3',5'-bisphosphate + H(+). Its function is as follows. Transfers the 4'-phosphopantetheine moiety from coenzyme A to a Ser of acyl-carrier-protein. In Clostridium tetani (strain Massachusetts / E88), this protein is Holo-[acyl-carrier-protein] synthase.